The primary structure comprises 69 residues: NADH dehydrogenase [ubiquinone] 1 beta subcomplex subunit 2 (69 aa).

This sequence belongs to the complex I NDUFB2 subunit family. In terms of assembly, complex I is composed of at least 49 different subunits.

It localises to the mitochondrion inner membrane. Functionally, accessory subunit of the mitochondrial membrane respiratory chain NADH dehydrogenase (Complex I), that is believed not to be involved in catalysis. Complex I functions in the transfer of electrons from NADH to the respiratory chain. The immediate electron acceptor for the enzyme is believed to be ubiquinone. The polypeptide is NADH dehydrogenase [ubiquinone] 1 beta subcomplex subunit 2 (Arabidopsis thaliana (Mouse-ear cress)).